The chain runs to 265 residues: Tryptophan synthase alpha chain (265 aa).

Active-site proton acceptor residues include Glu48 and Asp59.

This sequence belongs to the TrpA family. As to quaternary structure, tetramer of two alpha and two beta chains.

It catalyses the reaction (1S,2R)-1-C-(indol-3-yl)glycerol 3-phosphate + L-serine = D-glyceraldehyde 3-phosphate + L-tryptophan + H2O. It participates in amino-acid biosynthesis; L-tryptophan biosynthesis; L-tryptophan from chorismate: step 5/5. Its function is as follows. The alpha subunit is responsible for the aldol cleavage of indoleglycerol phosphate to indole and glyceraldehyde 3-phosphate. The protein is Tryptophan synthase alpha chain of Ruthia magnifica subsp. Calyptogena magnifica.